The primary structure comprises 142 residues: Hemoglobin subunit alpha (142 aa).

Residues Val2–Arg142 form the Globin domain. Position 4 is a phosphoserine (Ser4). Lys8 is modified (N6-succinyllysine). Thr9 carries the phosphothreonine modification. At Lys12 the chain carries N6-succinyllysine. Position 17 is an N6-acetyllysine; alternate (Lys17). The residue at position 17 (Lys17) is an N6-succinyllysine; alternate. Tyr25 is modified (phosphotyrosine). Ser36 carries the phosphoserine modification. Lys41 is modified (N6-succinyllysine). Phosphoserine is present on Ser50. His59 provides a ligand contact to O2. His88 contributes to the heme b binding site. At Ser103 the chain carries Phosphoserine. Thr109 bears the Phosphothreonine mark. Residue Ser125 is modified to Phosphoserine. Phosphothreonine is present on residues Thr135 and Thr138. Phosphoserine is present on Ser139.

The protein belongs to the globin family. Heterotetramer of two alpha chains and two beta chains. As to expression, red blood cells.

Its function is as follows. Involved in oxygen transport from the lung to the various peripheral tissues. Hemopressin acts as an antagonist peptide of the cannabinoid receptor CNR1. Hemopressin-binding efficiently blocks cannabinoid receptor CNR1 and subsequent signaling. In Ailurus fulgens (Himalayan red panda), this protein is Hemoglobin subunit alpha (HBA).